A 194-amino-acid polypeptide reads, in one-letter code: dCTP deaminase (194 aa).

DCTP-binding positions include 110 to 115, D128, 136 to 138, Y171, K178, and Q182; these read RSSLAR and VLE. E138 (proton donor/acceptor) is an active-site residue.

This sequence belongs to the dCTP deaminase family. As to quaternary structure, homotrimer.

The enzyme catalyses dCTP + H2O + H(+) = dUTP + NH4(+). It participates in pyrimidine metabolism; dUMP biosynthesis; dUMP from dCTP (dUTP route): step 1/2. Its function is as follows. Catalyzes the deamination of dCTP to dUTP. This Glaesserella parasuis serovar 5 (strain SH0165) (Haemophilus parasuis) protein is dCTP deaminase.